Reading from the N-terminus, the 574-residue chain is Intraflagellar transport protein 56 homolog (574 aa).

TPR repeat units lie at residues 20–52 (AQKM…GNLD), 57–90 (DSLQ…DDAP), and 151–184 (LEDR…SPNL).

It belongs to the IFT56 family. Component of the IFT complex B composed of at least che-2, che-13, dyf-1, dyf-3, dyf-6, dyf-11, dyf-13, ift-20, ift-74, ift-81, ifta-2, osm-1, osm-5 and osm-6.

The protein localises to the cell projection. It localises to the cilium. Functionally, component of the intraflagellar transport (IFT) complex B required for transport of proteins in the motile cilium. May be required for ciliary entrance and transport of specific ciliary cargo proteins such as che-3 which are related to motility. The polypeptide is Intraflagellar transport protein 56 homolog (Caenorhabditis elegans).